The following is a 253-amino-acid chain: 3-dehydroquinate dehydratase (253 aa).

3-dehydroquinate contacts are provided by residues 46-48 (EWR) and Arg82. His143 acts as the Proton donor/acceptor in catalysis. Lys170 acts as the Schiff-base intermediate with substrate in catalysis. 3-dehydroquinate-binding residues include Arg213, Ser232, and Gln236.

Belongs to the type-I 3-dehydroquinase family. In terms of assembly, homodimer.

It carries out the reaction 3-dehydroquinate = 3-dehydroshikimate + H2O. Its pathway is metabolic intermediate biosynthesis; chorismate biosynthesis; chorismate from D-erythrose 4-phosphate and phosphoenolpyruvate: step 3/7. Involved in the third step of the chorismate pathway, which leads to the biosynthesis of aromatic amino acids. Catalyzes the cis-dehydration of 3-dehydroquinate (DHQ) and introduces the first double bond of the aromatic ring to yield 3-dehydroshikimate. The polypeptide is 3-dehydroquinate dehydratase (Bacillus velezensis (strain DSM 23117 / BGSC 10A6 / LMG 26770 / FZB42) (Bacillus amyloliquefaciens subsp. plantarum)).